The primary structure comprises 373 residues: Flagellar P-ring protein (373 aa).

Positions 1–30 (MTNRWSFDVKKNLVTLILTWLCLSISTAQA) are cleaved as a signal peptide.

Belongs to the FlgI family. In terms of assembly, the basal body constitutes a major portion of the flagellar organelle and consists of four rings (L,P,S, and M) mounted on a central rod.

The protein resides in the periplasm. It localises to the bacterial flagellum basal body. In terms of biological role, assembles around the rod to form the L-ring and probably protects the motor/basal body from shearing forces during rotation. The polypeptide is Flagellar P-ring protein (Aliivibrio salmonicida (strain LFI1238) (Vibrio salmonicida (strain LFI1238))).